The following is a 539-amino-acid chain: Chaperone Ric-8A (539 aa).

The segment at 507-539 (MGITPSGNLAPMENAIRDMADERSSSDSDLGLD) is disordered. Positions 521-532 (AIRDMADERSSS) are enriched in basic and acidic residues.

It belongs to the synembryn family.

It is found in the cytoplasm. The protein localises to the cell cortex. Chaperone that specifically binds and folds nascent G alpha proteins prior to G protein heterotrimer formation, promoting their stability and activity: folds GNAI1, GNAO1, GNA13 and GNAQ. Does not fold G(s) G-alpha proteins GNAS nor GNAL. Also acts as a guanine nucleotide exchange factor (GEF) for G alpha proteins by stimulating exchange of bound GDP for free GTP. In Gallus gallus (Chicken), this protein is Chaperone Ric-8A (RIC8A).